Consider the following 396-residue polypeptide: 1-deoxy-D-xylulose 5-phosphate reductoisomerase (396 aa).

NADPH-binding residues include T10, G11, S12, I13, and N123. Residue K124 participates in 1-deoxy-D-xylulose 5-phosphate binding. Position 125 (E125) interacts with NADPH. D149 provides a ligand contact to Mn(2+). S150, E151, S185, and H208 together coordinate 1-deoxy-D-xylulose 5-phosphate. Residue E151 coordinates Mn(2+). An NADPH-binding site is contributed by G214. The 1-deoxy-D-xylulose 5-phosphate site is built by S221, N226, K227, and E230. E230 lines the Mn(2+) pocket.

This sequence belongs to the DXR family. Mg(2+) is required as a cofactor. Mn(2+) serves as cofactor.

It carries out the reaction 2-C-methyl-D-erythritol 4-phosphate + NADP(+) = 1-deoxy-D-xylulose 5-phosphate + NADPH + H(+). The protein operates within isoprenoid biosynthesis; isopentenyl diphosphate biosynthesis via DXP pathway; isopentenyl diphosphate from 1-deoxy-D-xylulose 5-phosphate: step 1/6. In terms of biological role, catalyzes the NADPH-dependent rearrangement and reduction of 1-deoxy-D-xylulose-5-phosphate (DXP) to 2-C-methyl-D-erythritol 4-phosphate (MEP). This Shewanella baltica (strain OS155 / ATCC BAA-1091) protein is 1-deoxy-D-xylulose 5-phosphate reductoisomerase.